The following is a 256-amino-acid chain: tRNA-cytidine(32) 2-sulfurtransferase (256 aa).

The PP-loop motif signature appears at 35–40; that stretch reads SGGKDS. [4Fe-4S] cluster contacts are provided by cysteine 110, cysteine 113, and cysteine 201.

This sequence belongs to the TtcA family. In terms of assembly, homodimer. The cofactor is Mg(2+). It depends on [4Fe-4S] cluster as a cofactor.

It localises to the cytoplasm. The enzyme catalyses cytidine(32) in tRNA + S-sulfanyl-L-cysteinyl-[cysteine desulfurase] + AH2 + ATP = 2-thiocytidine(32) in tRNA + L-cysteinyl-[cysteine desulfurase] + A + AMP + diphosphate + H(+). It functions in the pathway tRNA modification. In terms of biological role, catalyzes the ATP-dependent 2-thiolation of cytidine in position 32 of tRNA, to form 2-thiocytidine (s(2)C32). The sulfur atoms are provided by the cysteine/cysteine desulfurase (IscS) system. This Coxiella burnetii (strain RSA 493 / Nine Mile phase I) protein is tRNA-cytidine(32) 2-sulfurtransferase.